Consider the following 562-residue polypeptide: MYKEIIAYLKLKYGKVKPQSVIGKIIAKNPELKAKIKELIPIIEQEIKEVEQMDIEQIKELAKAYEQTIEKKEKDIEIPVKDKVITRFAPNPSGLLHIGHARAIVLNHYIAKKYNGQFILRIEDTDPDVKKPMIEAYELIPKDVEWLIQEKPDKIVVQSDRLDIYYKYIEELIKQGKAYVCLCKAEEFREYRNKGLPCPHRNQSIEENLELWSKMLKGEFKKGEAVVRLKTDLTHKDPGVRDFPIARIVENPHPRIGYKPVFPLYNFAVVIDDHLLGITHVIRMKEHTNNAIKQSFIYKAFGWEEPIYLEYGALLTDMPTHKSEIRKLIEQKQIEGWDDIRLPTLIALRRRGILPEAIYEYIVKDVGLNKADIKVDWNKIYYYHKIRIDKQTPRYFMIRDPIAIVIENYDDIIDKFEIKNGIPYKKISKHPDVDLGYRELPIKEVLYIDKRDAERLKQKPLRLFELFNIKFVGEIEIEYGDEYSKTKEKAYAVRVISFDVQEAIKNKYPIVQWLPEYEETTLFELDGYKKAYVEPNIKENYVHFIREGYYKRENDKWIFSVK.

The 'HIGH' region motif lies at 90-100 (PNPSGLLHIGH).

This sequence belongs to the class-I aminoacyl-tRNA synthetase family. Glutamate--tRNA ligase type 2 subfamily.

The protein localises to the cytoplasm. It carries out the reaction tRNA(Glu) + L-glutamate + ATP = L-glutamyl-tRNA(Glu) + AMP + diphosphate. Catalyzes the attachment of glutamate to tRNA(Glu) in a two-step reaction: glutamate is first activated by ATP to form Glu-AMP and then transferred to the acceptor end of tRNA(Glu). The chain is Glutamate--tRNA ligase from Nanoarchaeum equitans (strain Kin4-M).